The primary structure comprises 91 residues: Antifungal protein opdH (91 aa).

Residues 1–18 (MQFSSLSLVFLAVIGAIA) form the signal peptide. Residues 19–33 (NPIAVDSELENRDVQ) constitute a propeptide that is removed on maturation. 3 disulfide bridges follow: Cys41/Cys69, Cys48/Cys76, and Cys61/Cys87.

Belongs to the antifungal protein pafB family.

The protein localises to the secreted. It localises to the host cytoplasm. Functionally, antifungal protein; part of the gene cluster that mediates the biosynthesis of oxopyrrolidines, polyketide-amino acid hybrid compounds with feature structures of tetramic acid. Acts as an inhibitor of growth of various molds and yeasts. The sequence is that of Antifungal protein opdH from Penicillium oxalicum (strain 114-2 / CGMCC 5302) (Penicillium decumbens).